We begin with the raw amino-acid sequence, 159 residues long: MNRVLYPGTFDPITKGHGDLVERASRLFDQVVIAVAASPKKNPLFPLEQRVELAREVTKHLPNVEVVGFSTLLAHFAKEQNANVFLRGLRAVSDFEYEFQLANMNRQLAPDVESLFLTPSERYSFISSTLVREIATLGGDITKFVHPAVAQALTERFKR.

Thr9 contacts substrate. ATP contacts are provided by residues 9-10 (TF) and His17. Substrate is bound by residues Lys41, Leu73, and Arg87. Residues 88–90 (GLR), Glu98, and 123–129 (YSFISST) each bind ATP.

The protein belongs to the bacterial CoaD family. Homohexamer. Mg(2+) serves as cofactor.

It localises to the cytoplasm. The catalysed reaction is (R)-4'-phosphopantetheine + ATP + H(+) = 3'-dephospho-CoA + diphosphate. The protein operates within cofactor biosynthesis; coenzyme A biosynthesis; CoA from (R)-pantothenate: step 4/5. Functionally, reversibly transfers an adenylyl group from ATP to 4'-phosphopantetheine, yielding dephospho-CoA (dPCoA) and pyrophosphate. The protein is Phosphopantetheine adenylyltransferase of Pseudomonas syringae pv. tomato (strain ATCC BAA-871 / DC3000).